We begin with the raw amino-acid sequence, 350 residues long: Biotin synthase (350 aa).

Positions 41–265 (NEVQISRLLS…VMPLSRVRLS (225 aa)) constitute a Radical SAM core domain. Residues C56, C60, and C63 each contribute to the [4Fe-4S] cluster site. Residues C100, C131, C191, and R263 each contribute to the [2Fe-2S] cluster site.

The protein belongs to the radical SAM superfamily. Biotin synthase family. As to quaternary structure, homodimer. Requires [4Fe-4S] cluster as cofactor. The cofactor is [2Fe-2S] cluster.

The catalysed reaction is (4R,5S)-dethiobiotin + (sulfur carrier)-SH + 2 reduced [2Fe-2S]-[ferredoxin] + 2 S-adenosyl-L-methionine = (sulfur carrier)-H + biotin + 2 5'-deoxyadenosine + 2 L-methionine + 2 oxidized [2Fe-2S]-[ferredoxin]. It functions in the pathway cofactor biosynthesis; biotin biosynthesis; biotin from 7,8-diaminononanoate: step 2/2. Functionally, catalyzes the conversion of dethiobiotin (DTB) to biotin by the insertion of a sulfur atom into dethiobiotin via a radical-based mechanism. The polypeptide is Biotin synthase (Shewanella loihica (strain ATCC BAA-1088 / PV-4)).